Reading from the N-terminus, the 592-residue chain is Neurogenic locus notch homolog protein (592 aa).

An N-terminal signal peptide occupies residues 1–19 (MIFVLTLVALCTAIHCPDG). EGF-like domains lie at 64 to 104 (YPSI…DYQV), 106 to 146 (VPEA…EKCT), 267 to 307 (YPEA…NTCI), 353 to 387 (NSQT…PTCE), 453 to 488 (VPNS…ALCE), and 546 to 588 (IDGE…KHCN). Intrachain disulfides connect Cys68–Cys82, Cys76–Cys92, Cys110–Cys123, Cys117–Cys134, Cys136–Cys145, Cys271–Cys284, Cys278–Cys293, Cys295–Cys306, Cys362–Cys375, Cys377–Cys386, Cys457–Cys471, Cys478–Cys487, Cys550–Cys565, Cys555–Cys576, and Cys578–Cys587. Asn552 carries an N-linked (GlcNAc...) asparagine glycan.

Belongs to the NOTCH family. Interacts with EB1.

It localises to the cell projection. It is found in the cilium. The protein localises to the flagellum. Its subcellular location is the cytoplasm. The protein resides in the cytoskeleton. It localises to the flagellum axoneme. The protein is Neurogenic locus notch homolog protein of Giardia intestinalis (strain ATCC 50803 / WB clone C6) (Giardia lamblia).